The primary structure comprises 576 residues: NADH-quinone oxidoreductase subunit C/D (576 aa).

An NADH dehydrogenase I subunit C region spans residues 1-176 (MAWISLEKAK…NLEGLFNYDR (176 aa)). Positions 200 to 576 (SQIVLNWGPL…IDPVVGETDR (377 aa)) are NADH dehydrogenase I subunit D.

This sequence in the N-terminal section; belongs to the complex I 30 kDa subunit family. In the C-terminal section; belongs to the complex I 49 kDa subunit family. As to quaternary structure, NDH-1 is composed of 13 different subunits. Subunits NuoB, CD, E, F, and G constitute the peripheral sector of the complex.

It localises to the cell inner membrane. It carries out the reaction a quinone + NADH + 5 H(+)(in) = a quinol + NAD(+) + 4 H(+)(out). NDH-1 shuttles electrons from NADH, via FMN and iron-sulfur (Fe-S) centers, to quinones in the respiratory chain. The immediate electron acceptor for the enzyme in this species is believed to be ubiquinone. Couples the redox reaction to proton translocation (for every two electrons transferred, four hydrogen ions are translocated across the cytoplasmic membrane), and thus conserves the redox energy in a proton gradient. This Sulfurihydrogenibium sp. (strain YO3AOP1) protein is NADH-quinone oxidoreductase subunit C/D.